Here is a 508-residue protein sequence, read N- to C-terminus: Asparagine--tRNA ligase (508 aa).

The protein belongs to the class-II aminoacyl-tRNA synthetase family. As to quaternary structure, homodimer.

The protein resides in the cytoplasm. It carries out the reaction tRNA(Asn) + L-asparagine + ATP = L-asparaginyl-tRNA(Asn) + AMP + diphosphate + H(+). In Streptococcus suis (strain 05ZYH33), this protein is Asparagine--tRNA ligase.